A 312-amino-acid chain; its full sequence is UDP-N-acetylenolpyruvoylglucosamine reductase (312 aa).

The FAD-binding PCMH-type domain occupies 37–205 (VGGPADALVV…VCAEFALCPG (169 aa)). The active site involves Arg-185. Ser-234 functions as the Proton donor in the catalytic mechanism. Glu-304 is an active-site residue.

It belongs to the MurB family. FAD serves as cofactor.

Its subcellular location is the cytoplasm. The catalysed reaction is UDP-N-acetyl-alpha-D-muramate + NADP(+) = UDP-N-acetyl-3-O-(1-carboxyvinyl)-alpha-D-glucosamine + NADPH + H(+). It functions in the pathway cell wall biogenesis; peptidoglycan biosynthesis. In terms of biological role, cell wall formation. This Syntrophus aciditrophicus (strain SB) protein is UDP-N-acetylenolpyruvoylglucosamine reductase.